Here is a 289-residue protein sequence, read N- to C-terminus: D-alanine aminotransferase (289 aa).

Residue Tyr31 participates in substrate binding. Pyridoxal 5'-phosphate is bound at residue Arg50. Substrate-binding residues include Arg99 and His101. Lys147 carries the post-translational modification N6-(pyridoxal phosphate)lysine. A pyridoxal 5'-phosphate-binding site is contributed by Glu179.

The protein belongs to the class-IV pyridoxal-phosphate-dependent aminotransferase family. Homodimer. It depends on pyridoxal 5'-phosphate as a cofactor.

The catalysed reaction is D-alanine + 2-oxoglutarate = D-glutamate + pyruvate. Acts on the D-isomers of alanine, leucine, aspartate, glutamate, aminobutyrate, norvaline and asparagine. The enzyme transfers an amino group from a substrate D-amino acid to the pyridoxal phosphate cofactor to form pyridoxamine and an alpha-keto acid in the first half-reaction. The second half-reaction is the reverse of the first, transferring the amino group from the pyridoxamine to a second alpha-keto acid to form the product D-amino acid via a ping-pong mechanism. This is an important process in the formation of D-alanine and D-glutamate, which are essential bacterial cell wall components. In Listeria monocytogenes serovar 1/2a (strain ATCC BAA-679 / EGD-e), this protein is D-alanine aminotransferase (dat).